We begin with the raw amino-acid sequence, 595 residues long: Putative histone-lysine N-methyltransferase PRDM6 (595 aa).

The tract at residues 27–90 (FPHGGAGPLK…STPASSSTSA (64 aa)) is disordered. A compositionally biased stretch (gly residues) spans 30-40 (GGAGPLKGSGA). Residues 49–59 (PLQPPPPPPPP) show a composition bias toward pro residues. Positions 71 to 90 (PRPASLSSASSTPASSSTSA) are enriched in low complexity. Positions 246 to 365 (REVCLCTSTV…RGTELLVWYN (120 aa)) constitute an SET domain. The C2H2-type 1; degenerate zinc-finger motif lies at 473 to 495 (WKCGQCFKTFTQRILLQMHVCTQ). 2 C2H2-type zinc fingers span residues 501–523 (YQCGHCSQSFSQPSELRNHVVTH) and 529–551 (FKCGYCGRAFAGATTLNNHIRTH). A C2H2-type 4; degenerate zinc finger spans residues 557–579 (FKCERCERSFTQATQLSRHQRMP).

This sequence belongs to the class V-like SAM-binding methyltransferase superfamily. Interacts with HDAC1, HDAC2, HDAC3, CBX1 and EP300.

Its subcellular location is the nucleus. The catalysed reaction is L-lysyl(20)-[histone H4] + S-adenosyl-L-methionine = N(6)-methyl-L-lysyl(20)-[histone H4] + S-adenosyl-L-homocysteine + H(+). Functionally, putative histone methyltransferase that acts as a transcriptional repressor of smooth muscle gene expression. Promotes the transition from differentiated to proliferative smooth muscle by suppressing differentiation and maintaining the proliferative potential of vascular smooth muscle cells. Also plays a role in endothelial cells by inhibiting endothelial cell proliferation, survival and differentiation. It is unclear whether it has histone methyltransferase activity in vivo. According to some authors, it does not act as a histone methyltransferase by itself and represses transcription by recruiting EHMT2/G9a. According to others, it possesses histone methyltransferase activity when associated with other proteins and specifically methylates 'Lys-20' of histone H4 in vitro. 'Lys-20' methylation represents a specific tag for epigenetic transcriptional repression. This chain is Putative histone-lysine N-methyltransferase PRDM6 (PRDM6), found in Homo sapiens (Human).